The following is a 277-amino-acid chain: Large ribosomal subunit protein uL2 (277 aa).

Residues 227 to 277 (VMNPVDHPHGGGEGRTSGGRHPVTPWGVPTKGKKTRSKTKASDRLIMRRRK) are disordered. Residues 266–277 (KASDRLIMRRRK) show a composition bias toward basic and acidic residues.

The protein belongs to the universal ribosomal protein uL2 family. Part of the 50S ribosomal subunit. Forms a bridge to the 30S subunit in the 70S ribosome.

In terms of biological role, one of the primary rRNA binding proteins. Required for association of the 30S and 50S subunits to form the 70S ribosome, for tRNA binding and peptide bond formation. It has been suggested to have peptidyltransferase activity; this is somewhat controversial. Makes several contacts with the 16S rRNA in the 70S ribosome. This chain is Large ribosomal subunit protein uL2, found in Magnetococcus marinus (strain ATCC BAA-1437 / JCM 17883 / MC-1).